The primary structure comprises 647 residues: Leucine aminopeptidase 2 (647 aa).

Residues 169–171 (QCQ) and 295–300 (PYGGME) each bind substrate. Residue H324 coordinates Zn(2+). The active-site Proton acceptor is the E325. Zn(2+)-binding residues include H328 and E347. Y418 acts as the Proton donor in catalysis.

This sequence belongs to the peptidase M1 family. Zn(2+) serves as cofactor.

It localises to the cytoplasm. It is found in the nucleus. The enzyme catalyses an epoxide + H2O = an ethanediol. Its function is as follows. Aminopeptidase that preferentially cleaves di- and tripeptides. Also has low epoxide hydrolase activity (in vitro). Can hydrolyze the epoxide leukotriene LTA(4) but it forms preferentially 5,6-dihydroxy-7,9,11,14-eicosatetraenoic acid rather than the cytokine leukotriene B(4) as the product compared to the homologous mammalian enzyme (in vitro). In Yarrowia lipolytica (strain CLIB 122 / E 150) (Yeast), this protein is Leucine aminopeptidase 2.